The primary structure comprises 526 residues: Probable 1,4-alpha-glucan branching enzyme MT3115 (526 aa).

Glutamate 205 (nucleophile) is an active-site residue. Positions 251 and 268 each coordinate substrate. The Proton donor role is filled by aspartate 344. Tryptophan 396 and aspartate 462 together coordinate substrate.

Belongs to the glycosyl hydrolase 57 family.

The enzyme catalyses Transfers a segment of a (1-&gt;4)-alpha-D-glucan chain to a primary hydroxy group in a similar glucan chain.. Functionally, catalyzes the formation of branch points in alpha-glucans by cleavage of an alpha-1,4 glycosidic bond and subsequent transfer of the cleaved-off oligosaccharide to a new alpha-1,6 position. Is probably involved in the biosynthesis of 6-O-methylglucosyl lipopolysaccharides (MGLP). The polypeptide is Probable 1,4-alpha-glucan branching enzyme MT3115 (Mycobacterium tuberculosis (strain CDC 1551 / Oshkosh)).